The chain runs to 372 residues: MTALNHTPLNAAHRALNARMVDFGGWDMPVNYGSQIEEHEAVRTDAGMFDVSHMCVVDFTGSRVRAFFEHAIANNVGKLKTPGKALYSCLLNPQGGVIDDLIVYYFTEDFFRVVVNAGTAEKDIAWFNQLNEQGGYGLTIAPRRDFAIVAVQGPNAREKVWTTVPAARAATSELKPFNAARVAGTPFGELTVARTGYTGEDGFEVIVPAVHVEALWTALQQNGVRPCGLGARDTLRLEAGMNLYGQDMDETVSPLDAGLAWTVDLSAPRDFVGRDALERDGTRAAFVGLILQKENGKAGGVLRAHQKVVTPHGEGEITSGTFSPSMQESIAFARVPAAVHVGDTIHVQIRDKQLPARVVKLPFVRNGKVLAA.

This sequence belongs to the GcvT family. As to quaternary structure, the glycine cleavage system is composed of four proteins: P, T, L and H.

It carries out the reaction N(6)-[(R)-S(8)-aminomethyldihydrolipoyl]-L-lysyl-[protein] + (6S)-5,6,7,8-tetrahydrofolate = N(6)-[(R)-dihydrolipoyl]-L-lysyl-[protein] + (6R)-5,10-methylene-5,6,7,8-tetrahydrofolate + NH4(+). In terms of biological role, the glycine cleavage system catalyzes the degradation of glycine. In Burkholderia ambifaria (strain MC40-6), this protein is Aminomethyltransferase.